A 262-amino-acid polypeptide reads, in one-letter code: Snake venom serine proteinase 1 (262 aa).

The signal sequence occupies residues 1–18 (MVLIRVLANLLILQLSYA). Positions 19–24 (QKSSEL) are excised as a propeptide. One can recognise a Peptidase S1 domain in the interval 25–253 (VIGGDECNIN…HLDWIQSIIA (229 aa)). Disulfide bonds link C31–C165, C52–C68, C144–C214, C176–C193, and C204–C229. The Charge relay system role is filled by H67. N105 is a glycosylation site (N-linked (GlcNAc...) asparagine). D112 serves as the catalytic Charge relay system. S208 serves as the catalytic Charge relay system.

It belongs to the peptidase S1 family. Snake venom subfamily. As to quaternary structure, monomer. As to expression, expressed by the venom gland.

It is found in the secreted. Its function is as follows. Snake venom serine protease that may act in the hemostasis system of the prey. This is Snake venom serine proteinase 1 from Crotalus adamanteus (Eastern diamondback rattlesnake).